Consider the following 475-residue polypeptide: MIMTPPRKLHIKSYGCQMNVYDAQRMVDTLAPEGFVETADPAEADLVILNTCHIREKASEKVFSELGRLRVIKEEAARTGREMKIAVAGCVAQAEGAEITRRASTVDVVVGPQSYHNLPKLLAKARDGAPAIETEFPIEDKFSALPAPKPAAIRARGVSAFVTVQEGCDKFCTFCVVPYTRGMEVSRPVADIVADAKRLAENGVRELTLIGQNVNAYHGDDENGRTSSLGRLLHRLAMLPGIARLRYSTSHPRDVDDSLIEAHRDIPAVMPFVHLPVQSGSDRILAAMNRKHTAADYIRTIERFRKVRPEIAFSSDFIVGFPGESEQDFADTLALVTQIGYAGAYSFKYSPRPGTPAADMQETDTALAVPAAVMDERLAQLQALIDAQQASFNRAAIGRTVEVLFERAAREPGQIVGRTAYLQPAHVMASPDIIGKVLPVTIDSLERYSLKGRLASEETAVASLRSTQRESETFA.

Positions 7-127 (RKLHIKSYGC…LPKLLAKARD (121 aa)) constitute an MTTase N-terminal domain. Residues Cys16, Cys52, Cys90, Cys168, Cys172, and Cys175 each coordinate [4Fe-4S] cluster. One can recognise a Radical SAM core domain in the interval 154–388 (RARGVSAFVT…AQLQALIDAQ (235 aa)). Residues 394-456 (RAAIGRTVEV…RYSLKGRLAS (63 aa)) form the TRAM domain.

It belongs to the methylthiotransferase family. MiaB subfamily. As to quaternary structure, monomer. [4Fe-4S] cluster serves as cofactor.

It is found in the cytoplasm. The enzyme catalyses N(6)-dimethylallyladenosine(37) in tRNA + (sulfur carrier)-SH + AH2 + 2 S-adenosyl-L-methionine = 2-methylsulfanyl-N(6)-dimethylallyladenosine(37) in tRNA + (sulfur carrier)-H + 5'-deoxyadenosine + L-methionine + A + S-adenosyl-L-homocysteine + 2 H(+). Functionally, catalyzes the methylthiolation of N6-(dimethylallyl)adenosine (i(6)A), leading to the formation of 2-methylthio-N6-(dimethylallyl)adenosine (ms(2)i(6)A) at position 37 in tRNAs that read codons beginning with uridine. This Afipia carboxidovorans (strain ATCC 49405 / DSM 1227 / KCTC 32145 / OM5) (Oligotropha carboxidovorans) protein is tRNA-2-methylthio-N(6)-dimethylallyladenosine synthase.